The chain runs to 242 residues: UPF0309 protein BOV_A0853 (242 aa).

The 180-residue stretch at 30-209 (AADLIAAAAR…FADVAARLVG (180 aa)) folds into the SIS domain.

It belongs to the UPF0309 family.

This Brucella ovis (strain ATCC 25840 / 63/290 / NCTC 10512) protein is UPF0309 protein BOV_A0853.